A 581-amino-acid chain; its full sequence is Protein FAM83D (581 aa).

Residues 1-297 (MALRYDGLDE…LYAQSKPISS (297 aa)) form a DUF1669 region. Residues 75–101 (PGEEGAAAGAEDSFGSSHDCSSGTYFP) are disordered. Over residues 88–98 (FGSSHDCSSGT) the composition is skewed to polar residues. Ser296 carries the phosphoserine modification. Residues 338 to 581 (TPRKVELGGE…REIMLYPSYQ (244 aa)) are required for interaction with KIF22 and function in chromosome congression. Disordered stretches follow at residues 366–401 (EDYFSSRKDRLEGRRVTDAATQTEPGETPAVSMSDV) and 426–503 (QTVV…GPPK). The span at 369–382 (FSSRKDRLEGRRVT) shows a compositional bias: basic and acidic residues. A compositionally biased stretch (low complexity) spans 426 to 438 (QTVVPTTSATTQT). Ser456 carries the phosphoserine modification. Low complexity predominate over residues 462–488 (SVSRSSSLRSSSSLSSQGSVASSIGSQ). Thr507 bears the Phosphothreonine mark.

The protein belongs to the FAM83 family. As to quaternary structure, interacts with FBXW7; promotes FBXW7 degradation. May interact with RAF1. Interacts with KIF22; recruits KIF22 to mitotic spindle microtubules. Interacts (via C-terminus) with DYNLL1. Interacts with HMMR. Directly interacts (via DUF1669) with CSNK1A1 and CSNK1A1L. Phosphorylated during mitosis.

The protein resides in the cytoplasm. Its subcellular location is the cytoskeleton. It is found in the spindle. It localises to the spindle pole. Functionally, through the degradation of FBXW7, may act indirectly on the expression and downstream signaling of MTOR, JUN and MYC. May play also a role in cell proliferation through activation of the ERK1/ERK2 signaling cascade. May also be important for proper chromosome congression and alignment during mitosis through its interaction with KIF22. This chain is Protein FAM83D, found in Bos taurus (Bovine).